Here is a 398-residue protein sequence, read N- to C-terminus: CCA-adding enzyme (398 aa).

ATP-binding residues include G32 and R35. Positions 32 and 35 each coordinate CTP. Mg(2+) is bound by residues D45 and D47. 5 residues coordinate ATP: R116, D159, R162, R165, and R168. Residues R116, D159, R162, R165, and R168 each contribute to the CTP site.

It belongs to the tRNA nucleotidyltransferase/poly(A) polymerase family. Bacterial CCA-adding enzyme type 3 subfamily. Homodimer. The cofactor is Mg(2+).

The catalysed reaction is a tRNA precursor + 2 CTP + ATP = a tRNA with a 3' CCA end + 3 diphosphate. It catalyses the reaction a tRNA with a 3' CCA end + 2 CTP + ATP = a tRNA with a 3' CCACCA end + 3 diphosphate. Its function is as follows. Catalyzes the addition and repair of the essential 3'-terminal CCA sequence in tRNAs without using a nucleic acid template. Adds these three nucleotides in the order of C, C, and A to the tRNA nucleotide-73, using CTP and ATP as substrates and producing inorganic pyrophosphate. tRNA 3'-terminal CCA addition is required both for tRNA processing and repair. Also involved in tRNA surveillance by mediating tandem CCA addition to generate a CCACCA at the 3' terminus of unstable tRNAs. While stable tRNAs receive only 3'-terminal CCA, unstable tRNAs are marked with CCACCA and rapidly degraded. The sequence is that of CCA-adding enzyme from Lacticaseibacillus paracasei (strain ATCC 334 / BCRC 17002 / CCUG 31169 / CIP 107868 / KCTC 3260 / NRRL B-441) (Lactobacillus paracasei).